The primary structure comprises 943 residues: Sodium- and chloride-dependent GABA transporter ine (943 aa).

The Cytoplasmic portion of the chain corresponds to 1-345 (MAENKDVSQV…RQQHWANKMQ (345 aa)). The interval 103 to 122 (HKQSPLRHTSVRTRPSSEVL) is disordered. The next 3 membrane-spanning stretches (helical) occupy residues 346–366 (FVLA…FPYM), 373–393 (GVFL…LLFM), and 418–438 (GAGL…SVII). The Extracellular segment spans residues 439–510 (GYSIYYFFTS…GLEYPGMMRW (72 aa)). Asn-476 carries N-linked (GlcNAc...) asparagine glycosylation. The next 9 membrane-spanning stretches (helical) occupy residues 511–531 (ELFA…WKSI), 539–559 (YFTA…AVTL), 591–607 (FNSL…FASY), 618–638 (TVAV…FAFS), 679–699 (WAVM…FAIV), 723–743 (IVVL…IIQG), 754–774 (YAAS…IAWF), 799–819 (CWLV…LINY), and 836–856 (YGIG…YAVI). Topologically, residues 857–943 (NFLRSSGDTF…HAEAGGPCGQ (87 aa)) are cytoplasmic.

The protein belongs to the sodium:neurotransmitter symporter (SNF) (TC 2.A.22) family. As to expression, expressed both maternally and zygotically. Developing embryos exhibit expression in the posterior hindgut, foregut, midgut, Malpighian tubules, anal plate, Garland cells, and a subset of cells in the central nervous system. Central nervous system expression is seen in segmentally repeating in cells flanking the midline of the ventral ganglion. Isoform A and isoform B are colocalized in both the nervous system and the fluid reabsorption system.

Its subcellular location is the membrane. In terms of biological role, plays a role in neuronal membrane excitation, important for normal response properties of the photoreceptor. Able to control excitability from either neurons or glia cells. Ine negatively regulates neuronal sodium channels. Controls neurotransmitter-mediated signaling pathways associated with the structure of the larval peripheral nerve, ine and eag control perineurial glial growth through partially redundant pathways. Isoform A and isoform B are both functional, although isoform A functions with greater efficiency. Has a role in osmolyte transport within the Malpighian tubule and hindgut. This Drosophila melanogaster (Fruit fly) protein is Sodium- and chloride-dependent GABA transporter ine.